The primary structure comprises 362 residues: Ribosomal RNA large subunit methyltransferase M (362 aa).

S-adenosyl-L-methionine contacts are provided by residues Ser194, 227–230, Asp246, Asp266, and Asp284; that span reads CPGG. Residue Lys313 is the Proton acceptor of the active site.

Belongs to the class I-like SAM-binding methyltransferase superfamily. RNA methyltransferase RlmE family. RlmM subfamily. As to quaternary structure, monomer.

Its subcellular location is the cytoplasm. It catalyses the reaction cytidine(2498) in 23S rRNA + S-adenosyl-L-methionine = 2'-O-methylcytidine(2498) in 23S rRNA + S-adenosyl-L-homocysteine + H(+). Functionally, catalyzes the 2'-O-methylation at nucleotide C2498 in 23S rRNA. This chain is Ribosomal RNA large subunit methyltransferase M, found in Aggregatibacter aphrophilus (strain NJ8700) (Haemophilus aphrophilus).